The following is a 382-amino-acid chain: 2-heptyl-3-hydroxy-4(1H)-quinolone synthase (382 aa).

It belongs to the 3-hydroxybenzoate 6-hydroxylase family.

The catalysed reaction is 2-heptyl-4(1H)-quinolone + NADH + O2 + H(+) = 2-heptyl-3-hydroxy-4(1H)-quinolone + NAD(+) + H2O. Involved in the terminal step of the biosynthesis of quinolone which in addition to serve as a potent signal for quorum sensing, chelates iron and promotes the formation of membrane vesicles (MVs). Catalyzes the hydroxylation of 2-heptyl-4-quinolone (C7-HHQ) to yield 2-heptyl-3-hydroxy-4-quinolone (PQS). PqsH is also able to hydroxylate HHQ analogs having alkyl side-chain lengths of 3 (C3-HHQ), 5 (C5-HHQ) and 9 (C9-HHQ) carbons, however catalytic efficiencies are significantly reduced for substrates with alkyl side-chain lengths below 7 carbons. This Pseudomonas aeruginosa (strain UCBPP-PA14) protein is 2-heptyl-3-hydroxy-4(1H)-quinolone synthase (pqsH).